The following is a 558-amino-acid chain: Glucose-6-phosphate isomerase (558 aa).

The Proton donor role is filled by Glu363. Catalysis depends on residues His394 and Lys522.

Belongs to the GPI family.

It localises to the cytoplasm. It catalyses the reaction alpha-D-glucose 6-phosphate = beta-D-fructose 6-phosphate. It functions in the pathway carbohydrate biosynthesis; gluconeogenesis. It participates in carbohydrate degradation; glycolysis; D-glyceraldehyde 3-phosphate and glycerone phosphate from D-glucose: step 2/4. Its function is as follows. Catalyzes the reversible isomerization of glucose-6-phosphate to fructose-6-phosphate. The chain is Glucose-6-phosphate isomerase from Blochmanniella floridana.